A 429-amino-acid polypeptide reads, in one-letter code: Glutamyl-tRNA reductase (429 aa).

Residues 50–53 (TCNR), S108, 113–115 (EPQ), and Q119 contribute to the substrate site. C51 acts as the Nucleophile in catalysis. 188–193 (GAGEMI) contacts NADP(+).

This sequence belongs to the glutamyl-tRNA reductase family. Homodimer.

The enzyme catalyses (S)-4-amino-5-oxopentanoate + tRNA(Glu) + NADP(+) = L-glutamyl-tRNA(Glu) + NADPH + H(+). It functions in the pathway porphyrin-containing compound metabolism; protoporphyrin-IX biosynthesis; 5-aminolevulinate from L-glutamyl-tRNA(Glu): step 1/2. In terms of biological role, catalyzes the NADPH-dependent reduction of glutamyl-tRNA(Glu) to glutamate 1-semialdehyde (GSA). This Polaromonas naphthalenivorans (strain CJ2) protein is Glutamyl-tRNA reductase.